Consider the following 62-residue polypeptide: MDNRLLEILVCPLCKGTLQHDRAHNELICHVDKLAYPIRDGIPVMLADEARQTVEGTPVDPA.

The protein belongs to the UPF0434 family.

The polypeptide is UPF0434 protein RSc2531 (Ralstonia nicotianae (strain ATCC BAA-1114 / GMI1000) (Ralstonia solanacearum)).